A 219-amino-acid chain; its full sequence is PKHD-type hydroxylase Plav_0037 (219 aa).

The Fe2OG dioxygenase domain maps to 78 to 172 (NFIRILLSRY…RRAAVGWIRS (95 aa)). Fe cation is bound by residues histidine 96, aspartate 98, and histidine 153. Residue arginine 163 participates in 2-oxoglutarate binding.

Fe(2+) serves as cofactor. L-ascorbate is required as a cofactor.

In Parvibaculum lavamentivorans (strain DS-1 / DSM 13023 / NCIMB 13966), this protein is PKHD-type hydroxylase Plav_0037.